Here is a 293-residue protein sequence, read N- to C-terminus: NAD kinase (293 aa).

Asp-72 functions as the Proton acceptor in the catalytic mechanism. Residues 72-73 (DG), 146-147 (ND), Arg-157, Arg-174, Asp-176, 187-192 (TAYALS), and Gln-247 each bind NAD(+).

It belongs to the NAD kinase family. It depends on a divalent metal cation as a cofactor.

Its subcellular location is the cytoplasm. The catalysed reaction is NAD(+) + ATP = ADP + NADP(+) + H(+). Involved in the regulation of the intracellular balance of NAD and NADP, and is a key enzyme in the biosynthesis of NADP. Catalyzes specifically the phosphorylation on 2'-hydroxyl of the adenosine moiety of NAD to yield NADP. In Chromohalobacter salexigens (strain ATCC BAA-138 / DSM 3043 / CIP 106854 / NCIMB 13768 / 1H11), this protein is NAD kinase.